Here is a 380-residue protein sequence, read N- to C-terminus: MNCIPSPISERKIQINNEDCIGKENAFHTIPRESSINLTPHSTNEKKVLSEVNSNKIDSLQLPRGKLQRDSTHLEKTRKRQLSNDSTDPIEPKTVKKIKCHQWKNLDSIEMDDPFMVAEYTDSIFSHLYEKEIQMLPTHNYLMDTQSPYHLKSSMRALLIDWLVEVHEKFHCLPETLFLAINLLDRFLSQNVVKLNKLQLLCITCLFIACKFEEVKLPKITNFAYVTDGAATVEGIRKAELFVLSSLGYNISLPNPLNFIRRISKADNYCIETRNMAKFIMEYSICCNKFIHLKPSYLAAMSMYIARKIKNENSKWDETFIHYSGGIDIESDPAFKDFISELVEDIAVPDTNLDSLRLKYKKPKHGMVYFKVFDWCKQKR.

Positions 63 to 91 (PRGKLQRDSTHLEKTRKRQLSNDSTDPIE) are disordered.

Belongs to the cyclin family. Cyclin AB subfamily.

In terms of biological role, involved in G1/S and or S phase progression. Interacts with CDC28. The chain is S-phase entry cyclin-6 (CLB6) from Saccharomyces cerevisiae (strain ATCC 204508 / S288c) (Baker's yeast).